Reading from the N-terminus, the 456-residue chain is Shootin-1 (456 aa).

An N-acetylmethionine modification is found at Met-1. 2 positions are modified to phosphoserine: Ser-3 and Ser-4. Positions 7–353 form a coiled coil; it reads EKQLQLITSL…RVNQSENSVP (347 aa). A phosphoserine; by PAK1 mark is found at Ser-101 and Ser-249. 2 disordered regions span residues 343-405 and 418-445; these read KRVN…VTDL and KKGV…CESA. Positions 352 to 369 are enriched in pro residues; it reads VPPPPPPPPPLPPPPPNP. Residue Ser-375 is modified to Phosphoserine.

It belongs to the shootin family. As to quaternary structure, interacts with L1CAM; this interaction occurs in axonal growth cones. Interacts with actin filament retrograde flow; this interaction is enhanced in a netrin-1- and PAK1-dependent manner and promotes F-actin-substrate coupling and concomitant formation of traction forces at axonal growth cones. Interacts with RUFY3. Interacts with PFN2. Interacts (via N-terminus) with KIF20B; this interaction is direct and promotes the association of SHTN1 to microtubules in primary neurons. Associates with microtubule. Phosphorylated on Ser-101 and Ser-249 by PAK1 through a CDC42- and RAC1-dependent signaling pathway, which enhances its association with F-actin retrograde flow in filopodia and lamellipodia of axonal growth cones. Phosphorylation on Ser-101 and Ser-249 is increased by netrin-1.

The protein localises to the perikaryon. It is found in the cell projection. It localises to the axon. The protein resides in the growth cone. Its subcellular location is the cytoplasm. The protein localises to the cytoskeleton. It is found in the filopodium. It localises to the lamellipodium. Its function is as follows. Involved in the generation of internal asymmetric signals required for neuronal polarization and neurite outgrowth. Mediates netrin-1-induced F-actin-substrate coupling or 'clutch engagement' within the axon growth cone through activation of CDC42, RAC1 and PAK1-dependent signaling pathway, thereby converting the F-actin retrograde flow into traction forces, concomitantly with filopodium extension and axon outgrowth. Plays a role in cytoskeletal organization by regulating the subcellular localization of phosphoinositide 3-kinase (PI3K) activity at the axonal growth cone. Also plays a role in regenerative neurite outgrowth. In the developing cortex, cooperates with KIF20B to promote both the transition from the multipolar to the bipolar stage and the radial migration of cortical neurons from the ventricular zone toward the superficial layer of the neocortex. Involved in the accumulation of phosphatidylinositol 3,4,5-trisphosphate (PIP3) in the growth cone of primary hippocampal neurons. The protein is Shootin-1 of Pongo abelii (Sumatran orangutan).